A 633-amino-acid polypeptide reads, in one-letter code: Phospholipid--sterol O-acyltransferase (633 aa).

The Cytoplasmic portion of the chain corresponds to 1–6 (MGANSK). A helical; Signal-anchor for type II membrane protein transmembrane segment spans residues 7–29 (SVTASFTVIAVFFLICGGRTAVE). Topologically, residues 30 to 633 (DETEFHGDYS…TSANMLLQYI (604 aa)) are lumenal. The Acyl-ester intermediate role is filled by Ser195. Residues Asp461 and His505 each act as charge relay system in the active site.

It belongs to the AB hydrolase superfamily. Lipase family.

It localises to the microsome membrane. Its function is as follows. Involved in lipid catabolism. Essential for sterol esters biosynthesis in leaves and seeds, but not in flowers. Plays a role in controlling the free sterol content of leaves. Catalyzes the transacylation of acyl groups from phospholipids to a variety of different sterols. Prefers phosphatidylethanolamine over phosphatidylcholine as an acyl donor. Not active toward neutral lipids. Highly specific for position sn-2, which in plant lipids is essentially devoid of saturated acyl groups. Broad sterol specificity (cholesterol &gt; campesterol &gt; sitosterol &gt; stigmasterol), but no activity with lupeol or beta-amyrin. This Arabidopsis thaliana (Mouse-ear cress) protein is Phospholipid--sterol O-acyltransferase (PSAT).